The sequence spans 459 residues: ATP synthase subunit beta (459 aa).

148–155 contacts ATP; the sequence is GGAGVGKT.

This sequence belongs to the ATPase alpha/beta chains family. F-type ATPases have 2 components, CF(1) - the catalytic core - and CF(0) - the membrane proton channel. CF(1) has five subunits: alpha(3), beta(3), gamma(1), delta(1), epsilon(1). CF(0) has three main subunits: a(1), b(2) and c(9-12). The alpha and beta chains form an alternating ring which encloses part of the gamma chain. CF(1) is attached to CF(0) by a central stalk formed by the gamma and epsilon chains, while a peripheral stalk is formed by the delta and b chains.

The protein localises to the cell inner membrane. It catalyses the reaction ATP + H2O + 4 H(+)(in) = ADP + phosphate + 5 H(+)(out). Produces ATP from ADP in the presence of a proton gradient across the membrane. The catalytic sites are hosted primarily by the beta subunits. In Cellvibrio japonicus (strain Ueda107) (Pseudomonas fluorescens subsp. cellulosa), this protein is ATP synthase subunit beta.